The chain runs to 229 residues: Cytochrome c oxidase subunit 2 (229 aa).

Over 1–26 (MSTWANLGLQDSASPLMEQLIFFHDH) the chain is Mitochondrial intermembrane. The helical transmembrane segment at 27–48 (ALLILVMITVLVGYLMFMLFFN) threads the bilayer. Residues 49-62 (SYVNRFLLHGQLIE) lie on the Mitochondrial matrix side of the membrane. Residues 63-82 (MIWTILPAIILLFIAMPSLR) form a helical membrane-spanning segment. At 83–229 (LLYLLDEINE…IKWISNSVNS (147 aa)) the chain is on the mitochondrial intermembrane side. Positions 161, 196, 198, 200, 204, and 207 each coordinate Cu cation. E198 is a Mg(2+) binding site.

This sequence belongs to the cytochrome c oxidase subunit 2 family. Component of the cytochrome c oxidase (complex IV, CIV), a multisubunit enzyme composed of a catalytic core of 3 subunits and several supernumerary subunits. The complex exists as a monomer or a dimer and forms supercomplexes (SCs) in the inner mitochondrial membrane with ubiquinol-cytochrome c oxidoreductase (cytochrome b-c1 complex, complex III, CIII). Requires Cu cation as cofactor.

It is found in the mitochondrion inner membrane. The catalysed reaction is 4 Fe(II)-[cytochrome c] + O2 + 8 H(+)(in) = 4 Fe(III)-[cytochrome c] + 2 H2O + 4 H(+)(out). Its function is as follows. Component of the cytochrome c oxidase, the last enzyme in the mitochondrial electron transport chain which drives oxidative phosphorylation. The respiratory chain contains 3 multisubunit complexes succinate dehydrogenase (complex II, CII), ubiquinol-cytochrome c oxidoreductase (cytochrome b-c1 complex, complex III, CIII) and cytochrome c oxidase (complex IV, CIV), that cooperate to transfer electrons derived from NADH and succinate to molecular oxygen, creating an electrochemical gradient over the inner membrane that drives transmembrane transport and the ATP synthase. Cytochrome c oxidase is the component of the respiratory chain that catalyzes the reduction of oxygen to water. Electrons originating from reduced cytochrome c in the intermembrane space (IMS) are transferred via the dinuclear copper A center (CU(A)) of subunit 2 and heme A of subunit 1 to the active site in subunit 1, a binuclear center (BNC) formed by heme A3 and copper B (CU(B)). The BNC reduces molecular oxygen to 2 water molecules using 4 electrons from cytochrome c in the IMS and 4 protons from the mitochondrial matrix. The polypeptide is Cytochrome c oxidase subunit 2 (mt:CoII) (Drosophila narragansett (Fruit fly)).